The following is a 238-amino-acid chain: tRNA (guanine-N(7)-)-methyltransferase (238 aa).

S-adenosyl-L-methionine contacts are provided by Glu62, Glu87, Asp119, and Asp141. Asp141 is an active-site residue. Residues Lys145, Asp177, and 216–219 (TRYE) each bind substrate.

It belongs to the class I-like SAM-binding methyltransferase superfamily. TrmB family.

The catalysed reaction is guanosine(46) in tRNA + S-adenosyl-L-methionine = N(7)-methylguanosine(46) in tRNA + S-adenosyl-L-homocysteine. It functions in the pathway tRNA modification; N(7)-methylguanine-tRNA biosynthesis. Functionally, catalyzes the formation of N(7)-methylguanine at position 46 (m7G46) in tRNA. The sequence is that of tRNA (guanine-N(7)-)-methyltransferase from Novosphingobium aromaticivorans (strain ATCC 700278 / DSM 12444 / CCUG 56034 / CIP 105152 / NBRC 16084 / F199).